The following is a 99-amino-acid chain: Nucleoid-associated protein SZO_16661 (99 aa).

It belongs to the YbaB/EbfC family. Homodimer.

Its subcellular location is the cytoplasm. It localises to the nucleoid. Binds to DNA and alters its conformation. May be involved in regulation of gene expression, nucleoid organization and DNA protection. This is Nucleoid-associated protein SZO_16661 from Streptococcus equi subsp. zooepidemicus (strain H70).